The sequence spans 943 residues: Translation initiation factor IF-2 (943 aa).

The span at 99–113 (VKAAQTQAAPVQPEQ) shows a compositional bias: low complexity. Residues 99–354 (VKAAQTQAAP…LEPNQHAFQA (256 aa)) are disordered. Residues 117 to 141 (DAVKARAEAAARAEARAKAEAEAAK) show a composition bias toward basic and acidic residues. Residues 145–172 (AKAGNKAKPAAQKPTEAKAETAPVAAET) show a composition bias toward low complexity. Over residues 173-197 (KPAEPKEKAVKPKHERNGKGKDAKK) the composition is skewed to basic and acidic residues. A compositionally biased stretch (low complexity) spans 200–215 (KPAAPAVPQPVVSAEE). A compositionally biased stretch (basic and acidic residues) spans 216–250 (QAQRDEEARRAAALRAHQEALLKEKQERQARREAM). Residues 251–264 (KQQAEQQAKAAQEA) show a composition bias toward low complexity. Composition is skewed to basic and acidic residues over residues 295-308 (AKKEDRRNRDDEGQ) and 319-335 (GGRDRNNARNGGDERVR). The tr-type G domain maps to 443-612 (PRPPVVTVMG…LLEAEVLELT (170 aa)). Residues 452–459 (GHVDHGKT) form a G1 region. 452 to 459 (GHVDHGKT) contributes to the GTP binding site. A G2 region spans residues 477–481 (GITQH). The interval 498 to 501 (DTPG) is G3. GTP is bound by residues 498-502 (DTPGH) and 552-555 (NKID). Residues 552-555 (NKID) are G4. The tract at residues 588-590 (SAK) is G5.

It belongs to the TRAFAC class translation factor GTPase superfamily. Classic translation factor GTPase family. IF-2 subfamily.

It localises to the cytoplasm. Its function is as follows. One of the essential components for the initiation of protein synthesis. Protects formylmethionyl-tRNA from spontaneous hydrolysis and promotes its binding to the 30S ribosomal subunits. Also involved in the hydrolysis of GTP during the formation of the 70S ribosomal complex. The chain is Translation initiation factor IF-2 from Neisseria gonorrhoeae (strain ATCC 700825 / FA 1090).